We begin with the raw amino-acid sequence, 603 residues long: Prostaglandin G/H synthase 1 (603 aa).

The first 27 residues, methionine 1–proline 27, serve as a signal peptide directing secretion. The EGF-like domain occupies proline 35 to threonine 73. Cystine bridges form between cysteine 39-cysteine 50, cysteine 40-cysteine 162, cysteine 44-cysteine 60, and cysteine 62-cysteine 72. N-linked (GlcNAc...) asparagine glycosylation is found at asparagine 71, asparagine 107, and asparagine 147. The active-site Proton acceptor is the histidine 210. Catalysis depends on tyrosine 388, which acts as the For cyclooxygenase activity. Histidine 391 is a heme b binding site. An intrachain disulfide couples cysteine 572 to cysteine 578.

Belongs to the prostaglandin G/H synthase family. In terms of assembly, homodimer. Requires heme b as cofactor. N-glycosylated. N-linked glycosylation is necessary for enzymatic activity. In terms of tissue distribution, brain cortex. Isoform 2 is expressed in the cerebral cortex and heart.

The protein resides in the microsome membrane. It is found in the endoplasmic reticulum membrane. It carries out the reaction (5Z,8Z,11Z,14Z)-eicosatetraenoate + AH2 + 2 O2 = prostaglandin H2 + A + H2O. The catalysed reaction is (5Z,8Z,11Z,14Z)-eicosatetraenoate + 2 O2 = prostaglandin G2. It catalyses the reaction prostaglandin G2 + AH2 = prostaglandin H2 + A + H2O. The enzyme catalyses (9Z,12Z)-octadecadienoate + AH2 + O2 = (9R)-hydroxy-(10E,12Z)-octadecadienoate + A + H2O. It carries out the reaction (9Z,12Z)-octadecadienoate + AH2 + O2 = (9S)-hydroxy-(10E,12Z)-octadecadienoate + A + H2O. The catalysed reaction is (9Z,12Z)-octadecadienoate + AH2 + O2 = (13S)-hydroxy-(9Z,11E)-octadecadienoate + A + H2O. It catalyses the reaction (9Z,12Z)-octadecadienoate + AH2 + O2 = (13R)-hydroxy-(9Z,11E)-octadecadienoate + A + H2O. The protein operates within lipid metabolism; prostaglandin biosynthesis. The cyclooxygenase activity is inhibited by nonsteroidal anti-inflammatory drugs (NSAIDs) including ibuprofen, flurbiprofen, ketoprofen, naproxen, flurbiprofen, anirolac, fenclofenac and diclofenac. In terms of biological role, dual cyclooxygenase and peroxidase that plays an important role in the biosynthesis pathway of prostanoids, a class of C20 oxylipins mainly derived from arachidonate ((5Z,8Z,11Z,14Z)-eicosatetraenoate, AA, C20:4(n-6)), with a particular role in the inflammatory response. The cyclooxygenase activity oxygenates AA to the hydroperoxy endoperoxide prostaglandin G2 (PGG2), and the peroxidase activity reduces PGG2 to the hydroxy endoperoxide prostaglandin H2 (PGH2), the precursor of all 2-series prostaglandins and thromboxanes. This complex transformation is initiated by abstraction of hydrogen at carbon 13 (with S-stereochemistry), followed by insertion of molecular O2 to form the endoperoxide bridge between carbon 9 and 11 that defines prostaglandins. The insertion of a second molecule of O2 (bis-oxygenase activity) yields a hydroperoxy group in PGG2 that is then reduced to PGH2 by two electrons. Involved in the constitutive production of prostanoids in particular in the stomach and platelets. In gastric epithelial cells, it is a key step in the generation of prostaglandins, such as prostaglandin E2 (PGE2), which plays an important role in cytoprotection. In platelets, it is involved in the generation of thromboxane A2 (TXA2), which promotes platelet activation and aggregation, vasoconstriction and proliferation of vascular smooth muscle cells. Can also use linoleate (LA, (9Z,12Z)-octadecadienoate, C18:2(n-6)) as substrate and produce hydroxyoctadecadienoates (HODEs) in a regio- and stereospecific manner, being (9R)-HODE ((9R)-hydroxy-(10E,12Z)-octadecadienoate) and (13S)-HODE ((13S)-hydroxy-(9Z,11E)-octadecadienoate) its major products. In Canis lupus familiaris (Dog), this protein is Prostaglandin G/H synthase 1 (PTGS1).